The chain runs to 39 residues: Larval cuticle protein SC6 (39 aa).

One can recognise a Chitin-binding type R&amp;R domain in the interval 15 to 39 (VDQFKYGLELDNSIKADQEGHLEGD).

Functionally, component of the cuticle of the larva of flesh fly. This Sarcophaga bullata (Grey flesh fly) protein is Larval cuticle protein SC6.